A 203-amino-acid chain; its full sequence is NAD(P)H-quinone oxidoreductase subunit M, chloroplastic (203 aa).

Residues 1 to 21 constitute a chloroplast transit peptide; that stretch reads MAASSSYMACAKFSMLGWLGG. Residues 34–48 show a composition bias toward low complexity; sequence SPQEQAEVQESQEVN. The segment at 34–61 is disordered; it reads SPQEQAEVQESQEVNAQEEEKVKQPVQP.

It belongs to the NDH complex subunit M family. In terms of assembly, part of the chloroplast NDH complex, composed of a mixture of chloroplast and nucleus encoded subunits. Component of the NDH subcomplex A, at least composed of ndhH, ndhI, ndhJ, ndhK, ndhL, ndhM, ndhN and ndhO.

The protein resides in the plastid. Its subcellular location is the chloroplast thylakoid membrane. It carries out the reaction a plastoquinone + NADH + (n+1) H(+)(in) = a plastoquinol + NAD(+) + n H(+)(out). It catalyses the reaction a plastoquinone + NADPH + (n+1) H(+)(in) = a plastoquinol + NADP(+) + n H(+)(out). Its function is as follows. NDH shuttles electrons from NAD(P)H:plastoquinone, via FMN and iron-sulfur (Fe-S) centers, to quinones in the photosynthetic chain and possibly in a chloroplast respiratory chain. The immediate electron acceptor for the enzyme in this species is believed to be plastoquinone. Couples the redox reaction to proton translocation, and thus conserves the redox energy in a proton gradient. This chain is NAD(P)H-quinone oxidoreductase subunit M, chloroplastic, found in Populus jackii (Balm of Gilead).